We begin with the raw amino-acid sequence, 432 residues long: Probable protein phosphatase 2C 33 (432 aa).

One can recognise a PPM-type phosphatase domain in the interval Gly27 to Ile298. Mn(2+)-binding residues include Asp74, Gly75, Asp250, and Asp289.

Belongs to the PP2C family. Requires Mg(2+) as cofactor. Mn(2+) is required as a cofactor.

It catalyses the reaction O-phospho-L-seryl-[protein] + H2O = L-seryl-[protein] + phosphate. The enzyme catalyses O-phospho-L-threonyl-[protein] + H2O = L-threonyl-[protein] + phosphate. This chain is Probable protein phosphatase 2C 33, found in Oryza sativa subsp. japonica (Rice).